An 85-amino-acid polypeptide reads, in one-letter code: Homeobox protein knotted-1-like 5 (85 aa).

The ELK domain maps to 1-21 (ELKEMLLKKYSGCLSRLRSEF). Residues 22–85 (LKKRKKGKLP…NQRKRHWKPS (64 aa)) constitute a DNA-binding region (homeobox; TALE-type).

Belongs to the TALE/KNOX homeobox family. As to expression, strongly expressed in ear inflorescence primordia and shoot meristem. Weakly expressed in embryos. Absent from leaves.

It localises to the nucleus. In terms of biological role, probably binds to the DNA sequence 5'-TGAC-3'. This is Homeobox protein knotted-1-like 5 (KNOX5) from Zea mays (Maize).